Here is a 396-residue protein sequence, read N- to C-terminus: 2,3-diketo-5-methylthiopentyl-1-phosphate enolase (396 aa).

The active-site Proton acceptor is Lys-85. Residues Lys-134, Lys-160 to Glu-163, His-251, Gly-323, and Gly-345 to Gly-346 each bind substrate. The Mg(2+) site is built by Lys-160, Asp-162, and Glu-163. The residue at position 160 (Lys-160) is an N6-carboxylysine.

It belongs to the RuBisCO large chain family. Type IV subfamily. Homodimer. Mg(2+) serves as cofactor.

The catalysed reaction is 5-methylsulfanyl-2,3-dioxopentyl phosphate = 2-hydroxy-5-methylsulfanyl-3-oxopent-1-enyl phosphate. Its pathway is amino-acid biosynthesis; L-methionine biosynthesis via salvage pathway; L-methionine from S-methyl-5-thio-alpha-D-ribose 1-phosphate: step 3/6. In terms of biological role, catalyzes the enolization of 2,3-diketo-5-methylthiopentyl-1-phosphate (DK-MTP-1-P) into 2-hydroxy-3-keto-5-methylthiopentenyl-1-phosphate (HK-MTPenyl-1-P). This is 2,3-diketo-5-methylthiopentyl-1-phosphate enolase from Exiguobacterium sibiricum (strain DSM 17290 / CCUG 55495 / CIP 109462 / JCM 13490 / 255-15).